The following is a 594-amino-acid chain: Glomulin (594 aa).

The residue at position 2 (A2) is an N-acetylalanine. Residues 2 to 553 (AVEELQSIIK…EEIPNMPPEM (552 aa)) form an alpha-helical region with structural similarity to HEAT repeats region. The segment at 300–594 (IDQLPMVLSP…STSEENIGIK (295 aa)) is important for interaction with RBX1.

In terms of assembly, interacts with FKBP4 and FKBP1A. Isoform 1: Interacts with RBX1 (via RING domain). Identified in complexes that contain RBX1 plus one of the cullins CUL1, CUL2, CUL3, and CUL4A. Identified in a SCF complex composed of CUL1, RBX1, SKP1, FBXW7 and GLMN. Component of a SCF-like complex consisting of CUL7, RBX1, SKP1, FBXW8 and GLMN. Interacts with unphosphorylated MET and is released upon MET phosphorylation. Post-translationally, phosphorylated on tyrosine residues. As to expression, ubiquitous.

Functionally, regulatory component of cullin-RING-based SCF (SKP1-Cullin-F-box protein) E3 ubiquitin-protein ligase complexes. Inhibits E3 ubiquitin ligase activity by binding to RBX1 (via RING domain) and inhibiting its interaction with the E2 ubiquitin-conjugating enzyme CDC34. Inhibits RBX1-mediated neddylation of CUL1. Required for normal stability and normal cellular levels of key components of SCF ubiquitin ligase complexes, including FBXW7, RBX1, CUL1, CUL2, CUL3, CUL4A, and thereby contributes to the regulation of CCNE1 and MYC levels. Essential for normal development of the vasculature. Contributes to the regulation of RPS6KB1 phosphorylation. The polypeptide is Glomulin (GLMN) (Homo sapiens (Human)).